Reading from the N-terminus, the 617-residue chain is MAGDKGGGDGERRLRQPIVVVLGHVDHGKTTLLDKIRRTAVAAKEAGGITQHIGASIVPADVIEKIAEPLKKVIPVKLVIPGLLFIDTPGHELFSNLRRRGGSVADFAILVVDIMEGFKPQTYEALELLKERRVPFLIAANKIDRIPGWKPNPDAPFIETIRRQDPKVREILEQRVYEIVGKMYEAGLPAELFTRIKDFRRKIAIVPVSARTGEGIPELLAVLAGLTQTYLKERLRYAEGPAKGVVLEVKEMQGFGTVVDAVIYDGVLKKEDIIVVGGREGPIVTRVRALLMPAPLQDIRSREARFVQVDRVYAAAGVRIAAPGLDDVIAGSPIYAAESEEEARKLMEAVQREIEELRFRTENIGVVVKADTLGTLEALVEALRRRGVPVRLADIGPVSRSDVLDAAVTRKIDPYLGVVLAFNVKVLPEAEEEASRAGVKIFRESMIYKLIEDYEEWVKKEKEAERLKALNSLIRPGKFRILPGYVFRRSDPAIVGVEVLGGVIRPGYPVMDSQGRELGRIMAIKDRDRSLEEARLGAAVAVSIQGRILIGRHANEGDILYTNVPAQHAYKILTEFKDLVSKDELDVLREIAEIKRRAADHEYNKVLLRLKIKRVSQ.

The tr-type G domain occupies leucine 14 to leucine 231. The segment at glycine 23 to threonine 30 is G1. Residue glycine 23–threonine 30 coordinates GTP. A G2 region spans residues glycine 48 to histidine 52. The tract at residues aspartate 87–glycine 90 is G3. Residues aspartate 87 to histidine 91 and asparagine 141 to aspartate 144 each bind GTP. Residues asparagine 141 to aspartate 144 form a G4 region. The tract at residues serine 209–arginine 211 is G5.

This sequence belongs to the TRAFAC class translation factor GTPase superfamily. Classic translation factor GTPase family. IF-2 subfamily.

Its function is as follows. Function in general translation initiation by promoting the binding of the formylmethionine-tRNA to ribosomes. Seems to function along with eIF-2. This Aeropyrum pernix (strain ATCC 700893 / DSM 11879 / JCM 9820 / NBRC 100138 / K1) protein is Probable translation initiation factor IF-2 (infB).